Here is a 404-residue protein sequence, read N- to C-terminus: Protein ORF23 (404 aa).

Belongs to the lymphocryptovirus BTRF1 family. Interacts with ORF34.

It is found in the host nucleus. The protein resides in the host cytoplasm. In terms of biological role, plays a role in the expression of late genes. In Homo sapiens (Human), this protein is Protein ORF23 (ORF23).